The primary structure comprises 560 residues: MPKNMETLQRSYMGPSTPNHNLFNNATELPDDLNFSTMDVPYDGSMPMNMSSDSLMNLLEDRSKKLACAVDTELARESTASEFVAGFSADSPQAQLAETGAETGAAGGSKRKASEVDSDSDSDDSSKGKKLVNKPKIRQRYKKATIQNRTSLTEERQYSTEICTVAAPDQIAKYFAQDFSAHLNEVKSECQMSANRFSDYISETGYYVFVVKKGDRKPFEVVFAKFVNNATNEYTNNYYMVDNRVFVVSLNNVKFMVSYKLVREQGIDIPPHVNLCNDAQAERTPLNCYFEPVKNAFQATLINHFHLDMFYAQTTFVTLMQAVGENKTNMLLNKLYQMYQDRSLFTLPIMLSRKEPVNENAPQNKNHAFSYVAQIMKYSKNLRFPQGDPTQQVMDRLEEIVTQKSSLTYKYSSVANLLFNRYGRRDNNADALKKVKKEDGNRLLVEQYMSYNENDDTSHNFIVLQFGGVNDERLTIAKRGKEFYWIAGEIKDISVDDLIKKYARNVHHVFRIINVNRRESTTWHNNLLKLLQLLLQNLIRLEDVQRYSDKSDTKFVYKKV.

Disordered regions lie at residues 1–25 and 99–134; these read MPKNMETLQRSYMGPSTPNHNLFNN and TGAETGAAGGSKRKASEVDSDSDSDDSSKGKKLVNK.

Belongs to the nucleopolyhedrovirus IE-1 protein family.

Its function is as follows. Regulatory transcriptional protein, which trans-activates gene expression from early baculovirus promoters. Can also trans-activate its own promoter, suggesting that it is autoregulated during normal infection of insect cells. The polypeptide is Trans-activating transcriptional regulatory protein (IE1) (Orgyia pseudotsugata (Douglas-fir tussock moth)).